A 594-amino-acid polypeptide reads, in one-letter code: Class I diterpene synthase TPS6, chloroplastic (594 aa).

5 residues coordinate Mg(2+): aspartate 330, aspartate 334, asparagine 474, glutamine 477, and glutamate 482. Positions 330–334 (DDFFD) match the DDXXD motif motif.

This sequence belongs to the terpene synthase family. It depends on Mg(2+) as a cofactor. Mostly expressed in trichomes of leaves and fruits.

The protein resides in the plastid. Its subcellular location is the chloroplast. The catalysed reaction is peregrinol diphosphate = labd-13(16),14-diene-9-ol + diphosphate. It carries out the reaction 9alpha-copalyl diphosphate = syn-isopimara-7,15-diene + diphosphate. It functions in the pathway secondary metabolite biosynthesis; terpenoid biosynthesis. Involved in the biosynthesis of labdane-type diterpenoid including cleroda-dienols, and peregrinol lactones and furan derivatives, dopaminergic diterpenoids that can bind to dopamine receptors in the human pituitary gland, have probably ability to lower prolactin levels, and are used to treat menstrual cycle disorders (e.g. premenstrual syndrome and mastodynia). Terpene synthase the catalyzes the conversion of peregrinol diphosphate to labda-13(16),14-dien-9-ol, and of syn-copalyl diphosophate to dehydroabietadiene and syn-isopimara-7,15-diene. This Vitex agnus-castus (Chaste tree) protein is Class I diterpene synthase TPS6, chloroplastic.